The sequence spans 152 residues: Small ribosomal subunit protein uS19z (152 aa).

The protein belongs to the universal ribosomal protein uS19 family.

Its subcellular location is the cytoplasm. The sequence is that of Small ribosomal subunit protein uS19z (RPS15B) from Arabidopsis thaliana (Mouse-ear cress).